The primary structure comprises 509 residues: Phosphoglycerate kinase, glycosomal (509 aa).

The (2R)-3-phosphoglycerate site is built by V32, D33, F34, N35, R48, S70, H71, G73, R74, R224, H260, and R261. G306 contacts ADP. G306 is a CDP binding site. K308 provides a ligand contact to (2R)-3-phosphoglycerate. K308 contacts AMP. Residue D311 participates in CDP binding. Position 311 (D311) interacts with Mg(2+). The ADP site is built by K312 and G330. Residue K312 coordinates AMP. K312 is a binding site for ATP. G330 lines the CDP pocket. AMP-binding residues include A331 and A403. ATP contacts are provided by A331 and A403. ADP-binding residues include A403 and N427. CDP is bound by residues G428 and F433. ADP is bound by residues F433, E434, D466, and S467. E434 contributes to the AMP binding site. ATP-binding residues include E434, D466, and S467. D466 lines the Mg(2+) pocket.

This sequence belongs to the phosphoglycerate kinase family. As to quaternary structure, monomer. Requires Mg(2+) as cofactor.

The protein resides in the glycosome. It carries out the reaction (2R)-3-phosphoglycerate + ATP = (2R)-3-phospho-glyceroyl phosphate + ADP. The protein operates within carbohydrate degradation; glycolysis; pyruvate from D-glyceraldehyde 3-phosphate: step 2/5. The protein is Phosphoglycerate kinase, glycosomal (56PGK) of Trypanosoma congolense.